Reading from the N-terminus, the 244-residue chain is tRNA pseudouridine synthase A (244 aa).

Aspartate 52 serves as the catalytic Nucleophile. Residue tyrosine 110 participates in substrate binding.

The protein belongs to the tRNA pseudouridine synthase TruA family. In terms of assembly, homodimer.

It carries out the reaction uridine(38/39/40) in tRNA = pseudouridine(38/39/40) in tRNA. Its function is as follows. Formation of pseudouridine at positions 38, 39 and 40 in the anticodon stem and loop of transfer RNAs. This is tRNA pseudouridine synthase A from Finegoldia magna (strain ATCC 29328 / DSM 20472 / WAL 2508) (Peptostreptococcus magnus).